The chain runs to 148 residues: SsrA-binding protein (148 aa).

Residues 119–148 (AKGKKQHDKRETEKKRDWEREKARLMRSPG) form a disordered region. Residues 126–142 (DKRETEKKRDWEREKAR) are compositionally biased toward basic and acidic residues.

It belongs to the SmpB family.

It localises to the cytoplasm. Its function is as follows. Required for rescue of stalled ribosomes mediated by trans-translation. Binds to transfer-messenger RNA (tmRNA), required for stable association of tmRNA with ribosomes. tmRNA and SmpB together mimic tRNA shape, replacing the anticodon stem-loop with SmpB. tmRNA is encoded by the ssrA gene; the 2 termini fold to resemble tRNA(Ala) and it encodes a 'tag peptide', a short internal open reading frame. During trans-translation Ala-aminoacylated tmRNA acts like a tRNA, entering the A-site of stalled ribosomes, displacing the stalled mRNA. The ribosome then switches to translate the ORF on the tmRNA; the nascent peptide is terminated with the 'tag peptide' encoded by the tmRNA and targeted for degradation. The ribosome is freed to recommence translation, which seems to be the essential function of trans-translation. The chain is SsrA-binding protein from Paraburkholderia xenovorans (strain LB400).